Here is a 216-residue protein sequence, read N- to C-terminus: Gamma-glutamylcyclotransferase 2-1 (216 aa).

5–10 (VFGYGS) is a binding site for substrate. Glu-87 acts as the Proton acceptor in catalysis.

Belongs to the gamma-glutamylcyclotransferase family. Requires Mn(2+) as cofactor. Expressed in the central vascular bundle of roots, leaf veins, hydathodes, cauline leaves, shoot apex, sepal veins, flower receptacles and developing seeds.

It is found in the cytoplasm. It carries out the reaction an alpha-(gamma-L-glutamyl)-L-amino acid = 5-oxo-L-proline + an L-alpha-amino acid. Its function is as follows. Catalyzes the formation of 5-oxoproline from gamma-glutamyl dipeptides and plays a significant role in glutathione (GSH) homeostasis. Converts both GSH and gamma-glutamyl-L-alanine to 5-oxoproline in vitro. Plays a role in detoxification of heavy metals and metalloids by recycling glutamate and maintaining GSH homeostasis. The protein is Gamma-glutamylcyclotransferase 2-1 of Arabidopsis thaliana (Mouse-ear cress).